The primary structure comprises 212 residues: Methylthioribulose-1-phosphate dehydratase (212 aa).

Residues His-97 and His-99 each coordinate Zn(2+).

It belongs to the aldolase class II family. MtnB subfamily. As to quaternary structure, homotetramer. Zn(2+) is required as a cofactor.

The enzyme catalyses 5-(methylsulfanyl)-D-ribulose 1-phosphate = 5-methylsulfanyl-2,3-dioxopentyl phosphate + H2O. It functions in the pathway amino-acid biosynthesis; L-methionine biosynthesis via salvage pathway; L-methionine from S-methyl-5-thio-alpha-D-ribose 1-phosphate: step 2/6. In terms of biological role, catalyzes the dehydration of methylthioribulose-1-phosphate (MTRu-1-P) into 2,3-diketo-5-methylthiopentyl-1-phosphate (DK-MTP-1-P). The polypeptide is Methylthioribulose-1-phosphate dehydratase (Bacillus cereus (strain AH187)).